We begin with the raw amino-acid sequence, 291 residues long: Phosphatidylcholine-sterol acyltransferase (291 aa).

N-linked (GlcNAc...) asparagine glycosylation is present at N28. S125 serves as the catalytic Nucleophile. A glycan (N-linked (GlcNAc...) asparagine) is linked at N179. A disulfide bridge connects residues C220 and C263. The active-site Charge relay system is the D252. N-linked (GlcNAc...) asparagine glycosylation occurs at N280.

The protein belongs to the AB hydrolase superfamily. Lipase family.

It is found in the secreted. It carries out the reaction a sterol + a 1,2-diacyl-sn-glycero-3-phosphocholine = a sterol ester + a 1-acyl-sn-glycero-3-phosphocholine. With respect to regulation, APOA1 is the most potent activator in plasma. Also activated by APOE, APOC1 and APOA4. In terms of biological role, central enzyme in the extracellular metabolism of plasma lipoproteins. Synthesized mainly in the liver and secreted into plasma where it converts cholesterol and phosphatidylcholines (lecithins) to cholesteryl esters and lysophosphatidylcholines on the surface of high and low density lipoproteins (HDLs and LDLs). The cholesterol ester is then transported back to the liver. Has a preference for plasma 16:0-18:2 or 18:O-18:2 phosphatidylcholines. Also produced in the brain by primary astrocytes, and esterifies free cholesterol on nascent APOE-containing lipoproteins secreted from glia and influences cerebral spinal fluid (CSF) APOE- and APOA1 levels. Together with APOE and the cholesterol transporter ABCA1, plays a key role in the maturation of glial-derived, nascent lipoproteins. Required for remodeling high-density lipoprotein particles into their spherical forms. The chain is Phosphatidylcholine-sterol acyltransferase (LCAT) from Myodes glareolus (Bank vole).